The chain runs to 266 residues: Phosphatidylserine decarboxylase proenzyme (266 aa).

Catalysis depends on charge relay system; for autoendoproteolytic cleavage activity residues aspartate 74, histidine 135, and serine 237. Residue serine 237 is the Schiff-base intermediate with substrate; via pyruvic acid; for decarboxylase activity of the active site. Serine 237 is subject to Pyruvic acid (Ser); by autocatalysis.

This sequence belongs to the phosphatidylserine decarboxylase family. PSD-B subfamily. Prokaryotic type I sub-subfamily. As to quaternary structure, heterodimer of a large membrane-associated beta subunit and a small pyruvoyl-containing alpha subunit. The cofactor is pyruvate. In terms of processing, is synthesized initially as an inactive proenzyme. Formation of the active enzyme involves a self-maturation process in which the active site pyruvoyl group is generated from an internal serine residue via an autocatalytic post-translational modification. Two non-identical subunits are generated from the proenzyme in this reaction, and the pyruvate is formed at the N-terminus of the alpha chain, which is derived from the carboxyl end of the proenzyme. The autoendoproteolytic cleavage occurs by a canonical serine protease mechanism, in which the side chain hydroxyl group of the serine supplies its oxygen atom to form the C-terminus of the beta chain, while the remainder of the serine residue undergoes an oxidative deamination to produce ammonia and the pyruvoyl prosthetic group on the alpha chain. During this reaction, the Ser that is part of the protease active site of the proenzyme becomes the pyruvoyl prosthetic group, which constitutes an essential element of the active site of the mature decarboxylase.

It is found in the cell membrane. The catalysed reaction is a 1,2-diacyl-sn-glycero-3-phospho-L-serine + H(+) = a 1,2-diacyl-sn-glycero-3-phosphoethanolamine + CO2. It participates in phospholipid metabolism; phosphatidylethanolamine biosynthesis; phosphatidylethanolamine from CDP-diacylglycerol: step 2/2. Functionally, catalyzes the formation of phosphatidylethanolamine (PtdEtn) from phosphatidylserine (PtdSer). The polypeptide is Phosphatidylserine decarboxylase proenzyme (Campylobacter jejuni subsp. jejuni serotype O:2 (strain ATCC 700819 / NCTC 11168)).